Here is a 347-residue protein sequence, read N- to C-terminus: Quinolinate synthase (347 aa).

2 residues coordinate iminosuccinate: H47 and S68. [4Fe-4S] cluster is bound at residue C113. Residues 139 to 141 and S156 contribute to the iminosuccinate site; that span reads YAN. [4Fe-4S] cluster is bound at residue C200. Iminosuccinate is bound by residues 226-228 and T243; that span reads HPE. C297 is a binding site for [4Fe-4S] cluster.

It belongs to the quinolinate synthase family. Type 1 subfamily. [4Fe-4S] cluster is required as a cofactor.

The protein localises to the cytoplasm. It catalyses the reaction iminosuccinate + dihydroxyacetone phosphate = quinolinate + phosphate + 2 H2O + H(+). It functions in the pathway cofactor biosynthesis; NAD(+) biosynthesis; quinolinate from iminoaspartate: step 1/1. In terms of biological role, catalyzes the condensation of iminoaspartate with dihydroxyacetone phosphate to form quinolinate. This is Quinolinate synthase from Shigella flexneri.